Reading from the N-terminus, the 805-residue chain is MFDITRKCVEWGDRLLVIESGKIARQADGAVVVDYGGTSVLSTVVSQKSKEPVDFLPLTVQFLAKSYAIGRIPGGFFKREGKPSDRETLISRLVDRSIRPLFPTGFCDEIVIVCNLLSYDQVSPPETVALIGAAAALAISGIPFPTPIAGAKIGYIREEERYILNPSAEELARSELDMFYSGTKSSVVMVESEASELSEEEMLGAVTFGHENCAQVLDLIEEFAEAAGPKDVVEFVPHDIGKVVSDISSGYSEKFSVAYSDHNKKTRVLQLDAAREGLYSDLCRKHVEESGEYTEQEVLLAIKTFERSLVRARVLDTLKRVDGRGFDQIRNIEIEVDLIPRSHGSALFTRGDTQALVITALGTPQDEQVVDGFDGDRRERFLLHYNFPSYAVGEAAALRPPGRREIGHGKLAWRAIHPVLPTKADFPYTIRVVSEITESDGSSSMATVCGASLALMDTGVPLKSSVAGIAMGLIKEGDRYAVLSDIIGDEDYLGDMDFKVAGTKDGITALQMDMKIRGIGFDIIEKSLQQAKDGRLFIIGKMDKVIKESREGVRDHVPRMESMIIDKNKIKNVIGTGGKNVREICEKTGVKIEISQDGTVMIYAVSRDAVEEAKNMIMCIVSEPEVGKVFSGVISEIAKYGAFVSFLGGRRGLVHISEIKNEHIGSVSDVLAVDDKVKVLVIGIDKDHVQLSMRRVDQDSGDLLEHESYSSSKKNGPQSGDASGGASGFRDYASGPARERRRSGGSGGRPVRRRSAGSSGSGSGGYYSVPQHVGTPDPVNGNDRRRGSGPQHASGGGGNKKPRFF.

Mg(2+) contacts are provided by Asp491 and Asp497. One can recognise a KH domain in the interval 558-617; the sequence is PRMESMIIDKNKIKNVIGTGGKNVREICEKTGVKIEISQDGTVMIYAVSRDAVEEAKNMI. Residues 627 to 694 form the S1 motif domain; that stretch reads GKVFSGVISE…DKDHVQLSMR (68 aa). A disordered region spans residues 702-805; the sequence is DLLEHESYSS…GGGNKKPRFF (104 aa). Positions 709-721 are enriched in polar residues; it reads YSSSKKNGPQSGD.

It belongs to the polyribonucleotide nucleotidyltransferase family. The cofactor is Mg(2+).

The protein localises to the cytoplasm. The enzyme catalyses RNA(n+1) + phosphate = RNA(n) + a ribonucleoside 5'-diphosphate. In terms of biological role, involved in mRNA degradation. Catalyzes the phosphorolysis of single-stranded polyribonucleotides processively in the 3'- to 5'-direction. The protein is Polyribonucleotide nucleotidyltransferase of Anaplasma marginale (strain St. Maries).